The following is a 441-amino-acid chain: Homogentisate 1,2-dioxygenase (441 aa).

Catalysis depends on His-287, which acts as the Proton acceptor. Residues His-330 and Glu-336 each coordinate Fe cation. 2 residues coordinate homogentisate: Tyr-345 and His-366. His-366 is a binding site for Fe cation.

Belongs to the homogentisate dioxygenase family. As to quaternary structure, hexamer; dimer of trimers. Fe cation serves as cofactor.

The catalysed reaction is homogentisate + O2 = 4-maleylacetoacetate + H(+). Its pathway is amino-acid degradation; L-phenylalanine degradation; acetoacetate and fumarate from L-phenylalanine: step 4/6. Its function is as follows. Involved in the catabolism of homogentisate (2,5-dihydroxyphenylacetate or 2,5-OH-PhAc), a central intermediate in the degradation of phenylalanine and tyrosine. Catalyzes the oxidative ring cleavage of the aromatic ring of homogentisate to yield maleylacetoacetate. The chain is Homogentisate 1,2-dioxygenase from Xanthomonas oryzae pv. oryzae (strain MAFF 311018).